We begin with the raw amino-acid sequence, 610 residues long: Elongation factor 4 (610 aa).

In terms of domain architecture, tr-type G spans 11–193 (EKIRNFSIIA…QIVEKVPAPT (183 aa)). Residues 23-28 (DHGKST) and 140-143 (NKID) each bind GTP.

The protein belongs to the TRAFAC class translation factor GTPase superfamily. Classic translation factor GTPase family. LepA subfamily.

It is found in the cell membrane. The enzyme catalyses GTP + H2O = GDP + phosphate + H(+). Its function is as follows. Required for accurate and efficient protein synthesis under certain stress conditions. May act as a fidelity factor of the translation reaction, by catalyzing a one-codon backward translocation of tRNAs on improperly translocated ribosomes. Back-translocation proceeds from a post-translocation (POST) complex to a pre-translocation (PRE) complex, thus giving elongation factor G a second chance to translocate the tRNAs correctly. Binds to ribosomes in a GTP-dependent manner. The protein is Elongation factor 4 of Streptococcus pyogenes serotype M3 (strain ATCC BAA-595 / MGAS315).